Consider the following 636-residue polypeptide: 1-deoxy-D-xylulose-5-phosphate synthase (636 aa).

Thiamine diphosphate is bound by residues His-74 and 115–117 (AHS). Asp-146 contacts Mg(2+). Thiamine diphosphate is bound by residues 147-148 (GS), Asn-176, Tyr-287, and Glu-369. Asn-176 lines the Mg(2+) pocket.

It belongs to the transketolase family. DXPS subfamily. Homodimer. Mg(2+) serves as cofactor. It depends on thiamine diphosphate as a cofactor.

The catalysed reaction is D-glyceraldehyde 3-phosphate + pyruvate + H(+) = 1-deoxy-D-xylulose 5-phosphate + CO2. It functions in the pathway metabolic intermediate biosynthesis; 1-deoxy-D-xylulose 5-phosphate biosynthesis; 1-deoxy-D-xylulose 5-phosphate from D-glyceraldehyde 3-phosphate and pyruvate: step 1/1. Functionally, catalyzes the acyloin condensation reaction between C atoms 2 and 3 of pyruvate and glyceraldehyde 3-phosphate to yield 1-deoxy-D-xylulose-5-phosphate (DXP). In Polaromonas naphthalenivorans (strain CJ2), this protein is 1-deoxy-D-xylulose-5-phosphate synthase.